The sequence spans 156 residues: Ribosome maturation factor RimP (156 aa).

It belongs to the RimP family.

The protein localises to the cytoplasm. In terms of biological role, required for maturation of 30S ribosomal subunits. The protein is Ribosome maturation factor RimP of Bacillus subtilis (strain 168).